Consider the following 85-residue polypeptide: UPF0512 protein R (85 aa).

The protein belongs to the UPF0512 family.

The protein is UPF0512 protein R of Dictyostelium discoideum (Social amoeba).